The primary structure comprises 213 residues: StAR-related lipid transfer protein 5 (213 aa).

The START domain occupies 1–213 (MDLATAAQVS…LEKAVKKFFG (213 aa)).

In terms of biological role, may be involved in the intracellular transport of sterols or other lipids. May bind cholesterol or other sterols. The polypeptide is StAR-related lipid transfer protein 5 (STARD5) (Bos taurus (Bovine)).